The chain runs to 659 residues: DNA mismatch repair protein MutL (659 aa).

Residues 338–459 (GAPRGASKPG…DTTSERDSLP (122 aa)) are disordered. Over residues 352–362 (SPEHSPTDRDA) the composition is skewed to basic and acidic residues. Residues 374–391 (SDGNGQRTAASGATSESP) are compositionally biased toward polar residues.

Belongs to the DNA mismatch repair MutL/HexB family.

Its function is as follows. This protein is involved in the repair of mismatches in DNA. It is required for dam-dependent methyl-directed DNA mismatch repair. May act as a 'molecular matchmaker', a protein that promotes the formation of a stable complex between two or more DNA-binding proteins in an ATP-dependent manner without itself being part of a final effector complex. The chain is DNA mismatch repair protein MutL from Halobacterium salinarum (strain ATCC 29341 / DSM 671 / R1).